The primary structure comprises 140 residues: Endoribonuclease YbeY (140 aa).

Positions 99, 103, and 109 each coordinate Zn(2+).

This sequence belongs to the endoribonuclease YbeY family. Requires Zn(2+) as cofactor.

It is found in the cytoplasm. Functionally, single strand-specific metallo-endoribonuclease involved in late-stage 70S ribosome quality control and in maturation of the 3' terminus of the 16S rRNA. The protein is Endoribonuclease YbeY of Wolinella succinogenes (strain ATCC 29543 / DSM 1740 / CCUG 13145 / JCM 31913 / LMG 7466 / NCTC 11488 / FDC 602W) (Vibrio succinogenes).